Consider the following 96-residue polypeptide: Non-specific lipid-transfer protein 2 (96 aa).

Residues 1–27 form the signal peptide; sequence MMRRLAVLVLAVAMVAACGGGVVGVAG. Intrachain disulfides connect C30/C62, C38/C52, C53/C88, and C64/C95.

The protein belongs to the plant LTP family. B11E subfamily.

Functionally, transfer lipids across membranes. May play a role in plant defense or in the biosynthesis of cuticle layers. This is Non-specific lipid-transfer protein 2 (LTP-2) from Oryza sativa subsp. indica (Rice).